Here is a 265-residue protein sequence, read N- to C-terminus: Elongation factor 1-delta (265 aa).

The span at 31-54 shows a compositional bias: polar residues; that stretch reads MGSASNKPHNSPQSAASALSNSGD. 2 disordered regions span residues 31–64 and 118–155; these read MGSA…RVAN and KVQV…DAEA. A compositionally biased stretch (acidic residues) spans 130 to 153; the sequence is GTGEDDDDDDDIDLFGSDNEEEDA.

This sequence belongs to the EF-1-beta/EF-1-delta family. In terms of assembly, EF-1 is composed of 4 subunits: alpha, beta, delta, and gamma.

Its function is as follows. EF-1-beta and EF-1-delta stimulate the exchange of GDP bound to EF-1-alpha to GTP. In Xenopus laevis (African clawed frog), this protein is Elongation factor 1-delta (eef1d).